A 153-amino-acid polypeptide reads, in one-letter code: Endoribonuclease YbeY (153 aa).

3 residues coordinate Zn(2+): histidine 113, histidine 117, and histidine 123.

The protein belongs to the endoribonuclease YbeY family. It depends on Zn(2+) as a cofactor.

The protein localises to the cytoplasm. In terms of biological role, single strand-specific metallo-endoribonuclease involved in late-stage 70S ribosome quality control and in maturation of the 3' terminus of the 16S rRNA. In Aliivibrio salmonicida (strain LFI1238) (Vibrio salmonicida (strain LFI1238)), this protein is Endoribonuclease YbeY.